The following is a 312-amino-acid chain: Methionyl-tRNA formyltransferase (312 aa).

Residue 109–112 (SLLP) coordinates (6S)-5,6,7,8-tetrahydrofolate.

The protein belongs to the Fmt family.

It carries out the reaction L-methionyl-tRNA(fMet) + (6R)-10-formyltetrahydrofolate = N-formyl-L-methionyl-tRNA(fMet) + (6S)-5,6,7,8-tetrahydrofolate + H(+). Functionally, attaches a formyl group to the free amino group of methionyl-tRNA(fMet). The formyl group appears to play a dual role in the initiator identity of N-formylmethionyl-tRNA by promoting its recognition by IF2 and preventing the misappropriation of this tRNA by the elongation apparatus. The chain is Methionyl-tRNA formyltransferase from Listeria welshimeri serovar 6b (strain ATCC 35897 / DSM 20650 / CCUG 15529 / CIP 8149 / NCTC 11857 / SLCC 5334 / V8).